Consider the following 239-residue polypeptide: tRNA (guanine-N(7)-)-methyltransferase (239 aa).

4 residues coordinate S-adenosyl-L-methionine: glutamate 69, glutamate 94, aspartate 121, and aspartate 144. Aspartate 144 is an active-site residue. Lysine 148 contributes to the substrate binding site. An interaction with RNA region spans residues 150–155; that stretch reads RHNKRR. Substrate-binding positions include aspartate 180 and 217 to 220; that span reads TKFE.

Belongs to the class I-like SAM-binding methyltransferase superfamily. TrmB family. In terms of assembly, monomer.

It carries out the reaction guanosine(46) in tRNA + S-adenosyl-L-methionine = N(7)-methylguanosine(46) in tRNA + S-adenosyl-L-homocysteine. It participates in tRNA modification; N(7)-methylguanine-tRNA biosynthesis. Catalyzes the formation of N(7)-methylguanine at position 46 (m7G46) in tRNA. The sequence is that of tRNA (guanine-N(7)-)-methyltransferase from Shigella dysenteriae serotype 1 (strain Sd197).